We begin with the raw amino-acid sequence, 107 residues long: Replication protein A 14 kDa subunit A (107 aa).

Position 1 is an N-acetylmethionine (M1).

Belongs to the replication factor A protein 3 family. As to quaternary structure, component of the heterotrimeric canonical replication protein A complex (RPA).

It localises to the nucleus. Its function is as follows. As part of the replication protein A (RPA/RP-A), a single-stranded DNA-binding heterotrimeric complex, may play an essential role in DNA replication, recombination and repair. Binds and stabilizes single-stranded DNA intermediates, preventing complementary DNA reannealing and recruiting different proteins involved in DNA metabolism. This Arabidopsis thaliana (Mouse-ear cress) protein is Replication protein A 14 kDa subunit A (RPA3A).